The primary structure comprises 262 residues: Nodulation protein J (262 aa).

In terms of domain architecture, ABC transmembrane type-2 spans 33–259; it reads ASLLGHLAEP…FLSTALLRRR (227 aa). Transmembrane regions (helical) follow at residues 35-55, 60-80, 125-145, 148-168, 177-197, and 231-251; these read LLGHLAEPLIYLFGLGAGLGV, VGGVSYTAFLAAGMVATSAMT, AALAGAGIGVVAAALGYTQWL, LYALPVIALTGLAFASLGMVV, YFIFYQTLVITPILFLSGAVF, and VVDVCQHVGALCIYIVIPFFL.

Belongs to the ABC-2 integral membrane protein family. Lipooligosaccharide exporter (TC 3.A.1.102) subfamily. In terms of assembly, the complex is composed of two ATP-binding proteins (NodI) and two transmembrane proteins (NodJ).

It is found in the cell inner membrane. Its function is as follows. Part of the ABC transporter complex NodIJ involved in the export of the nodulation factors (Nod factors), the bacterial signal molecules that induce symbiosis and subsequent nodulation induction. Nod factors are LCO (lipo-chitin oligosaccharide), a modified beta-1,4-linked N-acetylglucosamine oligosaccharide. This subunit encodes the transporter. This is Nodulation protein J (nodJ) from Rhizobium leguminosarum bv. trifolii.